We begin with the raw amino-acid sequence, 208 residues long: Small ribosomal subunit protein eS8 (208 aa).

Positions M1–A34 are disordered. The segment covering H7 to K26 has biased composition (basic residues).

It belongs to the eukaryotic ribosomal protein eS8 family. As to quaternary structure, component of the small ribosomal subunit. Identified in a IGF2BP1-dependent mRNP granule complex containing untranslated mRNAs. Part of the small subunit (SSU) processome, composed of more than 70 proteins and the RNA chaperone small nucleolar RNA (snoRNA) U3.

Its subcellular location is the cytoplasm. The protein resides in the membrane. The protein localises to the nucleus. It is found in the nucleolus. In terms of biological role, component of the small ribosomal subunit. The ribosome is a large ribonucleoprotein complex responsible for the synthesis of proteins in the cell. Part of the small subunit (SSU) processome, first precursor of the small eukaryotic ribosomal subunit. During the assembly of the SSU processome in the nucleolus, many ribosome biogenesis factors, an RNA chaperone and ribosomal proteins associate with the nascent pre-rRNA and work in concert to generate RNA folding, modifications, rearrangements and cleavage as well as targeted degradation of pre-ribosomal RNA by the RNA exosome. In Spodoptera frugiperda (Fall armyworm), this protein is Small ribosomal subunit protein eS8 (RpS8).